The sequence spans 107 residues: Phosphoribosyl-ATP pyrophosphatase (107 aa).

The protein belongs to the PRA-PH family.

Its subcellular location is the cytoplasm. It catalyses the reaction 1-(5-phospho-beta-D-ribosyl)-ATP + H2O = 1-(5-phospho-beta-D-ribosyl)-5'-AMP + diphosphate + H(+). The protein operates within amino-acid biosynthesis; L-histidine biosynthesis; L-histidine from 5-phospho-alpha-D-ribose 1-diphosphate: step 2/9. This chain is Phosphoribosyl-ATP pyrophosphatase, found in Nitrobacter hamburgensis (strain DSM 10229 / NCIMB 13809 / X14).